Reading from the N-terminus, the 917-residue chain is Spermatogenesis-associated protein 31D4 (917 aa).

The helical transmembrane segment at 29–49 threads the bilayer; that stretch reads FICLSGLGLFILYLFYMVLTL. Disordered stretches follow at residues 55 to 80, 152 to 195, and 773 to 798; these read EKNNDTQKHQGRARRKRKSVTFKDRK, SVSP…PPPL, and SQETAPKNHLLHDPETSSDEDLRSNS. Positions 63–74 are enriched in basic residues; sequence HQGRARRKRKSV. Residues 152 to 163 show a composition bias toward low complexity; that stretch reads SVSPLASSASGA. The segment covering 164-177 has biased composition (polar residues); the sequence is ESSFTLASTPSATT. Residues 782–798 show a composition bias toward basic and acidic residues; sequence LLHDPETSSDEDLRSNS.

Belongs to the SPATA31 family.

Its subcellular location is the membrane. In terms of biological role, may play a role in spermatogenesis. In Homo sapiens (Human), this protein is Spermatogenesis-associated protein 31D4 (SPATA31D4).